Reading from the N-terminus, the 175-residue chain is Peptide methionine sulfoxide reductase MsrA (175 aa).

Cys-12 is an active-site residue.

It belongs to the MsrA Met sulfoxide reductase family.

It catalyses the reaction L-methionyl-[protein] + [thioredoxin]-disulfide + H2O = L-methionyl-(S)-S-oxide-[protein] + [thioredoxin]-dithiol. The catalysed reaction is [thioredoxin]-disulfide + L-methionine + H2O = L-methionine (S)-S-oxide + [thioredoxin]-dithiol. In terms of biological role, has an important function as a repair enzyme for proteins that have been inactivated by oxidation. Catalyzes the reversible oxidation-reduction of methionine sulfoxide in proteins to methionine. The polypeptide is Peptide methionine sulfoxide reductase MsrA (Limosilactobacillus reuteri (strain DSM 20016) (Lactobacillus reuteri)).